Reading from the N-terminus, the 385-residue chain is S-adenosylmethionine synthase (385 aa).

Histidine 16 contacts ATP. Aspartate 18 contacts Mg(2+). K(+) is bound at residue glutamate 44. The L-methionine site is built by glutamate 57 and glutamine 100. Residues 100–110 are flexible loop; the sequence is QSPDINQGVDR. Residues 164 to 166, 230 to 231, aspartate 239, 245 to 246, alanine 262, and lysine 266 contribute to the ATP site; these read DGK, KF, and RK. Aspartate 239 provides a ligand contact to L-methionine. Lysine 270 is an L-methionine binding site.

This sequence belongs to the AdoMet synthase family. As to quaternary structure, homotetramer; dimer of dimers. The cofactor is Mg(2+). K(+) serves as cofactor.

The protein resides in the cytoplasm. It catalyses the reaction L-methionine + ATP + H2O = S-adenosyl-L-methionine + phosphate + diphosphate. It functions in the pathway amino-acid biosynthesis; S-adenosyl-L-methionine biosynthesis; S-adenosyl-L-methionine from L-methionine: step 1/1. Its function is as follows. Catalyzes the formation of S-adenosylmethionine (AdoMet) from methionine and ATP. The overall synthetic reaction is composed of two sequential steps, AdoMet formation and the subsequent tripolyphosphate hydrolysis which occurs prior to release of AdoMet from the enzyme. The chain is S-adenosylmethionine synthase from Helicobacter pylori (strain P12).